The following is a 259-amino-acid chain: MPEIHPTAVVHPAAEIADDVKIGPFCVVGEHVKLGPGCVLHSHVVIDGPSSFGSGNEFFPFSVIGLKSQDLKYKGEPTYLEVGDNNVFRENATINRATDIGGATRIGNNNLFLVSCHAGHDCQIGNHVIFSGFATAAGHVTVGDYAILAGCCAVHQFVSIGEHAMVGAMARVSQDVLPYTIVEGHPAVTRSVNSIGMQRRGFSEEDLKAVRMCYKKLFVNKKLTVHEALEELRHSGYAENACLRRIIQFVETSERGFCH.

The protein belongs to the transferase hexapeptide repeat family. LpxA subfamily. Homotrimer.

The protein resides in the cytoplasm. The enzyme catalyses a (3R)-hydroxyacyl-[ACP] + UDP-N-acetyl-alpha-D-glucosamine = a UDP-3-O-[(3R)-3-hydroxyacyl]-N-acetyl-alpha-D-glucosamine + holo-[ACP]. The protein operates within glycolipid biosynthesis; lipid IV(A) biosynthesis; lipid IV(A) from (3R)-3-hydroxytetradecanoyl-[acyl-carrier-protein] and UDP-N-acetyl-alpha-D-glucosamine: step 1/6. Involved in the biosynthesis of lipid A, a phosphorylated glycolipid that anchors the lipopolysaccharide to the outer membrane of the cell. The protein is Acyl-[acyl-carrier-protein]--UDP-N-acetylglucosamine O-acyltransferase of Akkermansia muciniphila (strain ATCC BAA-835 / DSM 22959 / JCM 33894 / BCRC 81048 / CCUG 64013 / CIP 107961 / Muc).